A 142-amino-acid polypeptide reads, in one-letter code: Galactose-6-phosphate isomerase subunit LacA 2 (142 aa).

This sequence belongs to the LacAB/RpiB family. Heteromultimeric protein consisting of LacA and LacB.

The catalysed reaction is aldehydo-D-galactose 6-phosphate = keto-D-tagatose 6-phosphate. The protein operates within carbohydrate metabolism; D-galactose 6-phosphate degradation; D-tagatose 6-phosphate from D-galactose 6-phosphate: step 1/1. The protein is Galactose-6-phosphate isomerase subunit LacA 2 of Streptococcus pyogenes serotype M3 (strain ATCC BAA-595 / MGAS315).